A 336-amino-acid chain; its full sequence is Holliday junction branch migration complex subunit RuvB (336 aa).

A large ATPase domain (RuvB-L) region spans residues 4-185 (ADRLISADIQ…FGIVQRLEFY (182 aa)). Residues Ile-24, Arg-25, Gly-66, Lys-69, Thr-70, Thr-71, 132-134 (EDY), Arg-175, Tyr-185, and Arg-222 contribute to the ATP site. A Mg(2+)-binding site is contributed by Thr-70. The interval 186-256 (NVDDLQHIVA…IASKALDMLN (71 aa)) is small ATPAse domain (RuvB-S). Residues 259 to 336 (AAGFDYLDRK…RHFNRIMEAP (78 aa)) are head domain (RuvB-H). Residues Arg-295, Arg-314, and Arg-319 each coordinate DNA.

Belongs to the RuvB family. In terms of assembly, homohexamer. Forms an RuvA(8)-RuvB(12)-Holliday junction (HJ) complex. HJ DNA is sandwiched between 2 RuvA tetramers; dsDNA enters through RuvA and exits via RuvB. An RuvB hexamer assembles on each DNA strand where it exits the tetramer. Each RuvB hexamer is contacted by two RuvA subunits (via domain III) on 2 adjacent RuvB subunits; this complex drives branch migration. In the full resolvosome a probable DNA-RuvA(4)-RuvB(12)-RuvC(2) complex forms which resolves the HJ.

Its subcellular location is the cytoplasm. It carries out the reaction ATP + H2O = ADP + phosphate + H(+). In terms of biological role, the RuvA-RuvB-RuvC complex processes Holliday junction (HJ) DNA during genetic recombination and DNA repair, while the RuvA-RuvB complex plays an important role in the rescue of blocked DNA replication forks via replication fork reversal (RFR). RuvA specifically binds to HJ cruciform DNA, conferring on it an open structure. The RuvB hexamer acts as an ATP-dependent pump, pulling dsDNA into and through the RuvAB complex. RuvB forms 2 homohexamers on either side of HJ DNA bound by 1 or 2 RuvA tetramers; 4 subunits per hexamer contact DNA at a time. Coordinated motions by a converter formed by DNA-disengaged RuvB subunits stimulates ATP hydrolysis and nucleotide exchange. Immobilization of the converter enables RuvB to convert the ATP-contained energy into a lever motion, pulling 2 nucleotides of DNA out of the RuvA tetramer per ATP hydrolyzed, thus driving DNA branch migration. The RuvB motors rotate together with the DNA substrate, which together with the progressing nucleotide cycle form the mechanistic basis for DNA recombination by continuous HJ branch migration. Branch migration allows RuvC to scan DNA until it finds its consensus sequence, where it cleaves and resolves cruciform DNA. The sequence is that of Holliday junction branch migration complex subunit RuvB from Proteus mirabilis (strain HI4320).